The primary structure comprises 183 residues: CyanoP (183 aa).

The first 19 residues, 1–19 (MLQRFFATALAIFVVLLGG), serve as a signal peptide directing secretion. Cys-20 carries the N-palmitoyl cysteine lipid modification. Cys-20 is lipidated: S-diacylglycerol cysteine. Residues Asp-31, Asp-34, Asp-54, His-58, Thr-63, Glu-87, Asp-91, His-142, Glu-163, and Glu-164 each coordinate Zn(2+).

The protein belongs to the PsbP family. CyanoP subfamily. In terms of assembly, monomer. Present in very small amounts in PSII. Zn(2+) is required as a cofactor.

The protein resides in the cellular thylakoid membrane. Plays a role in the early stages of photosystem II (PSII) assembly; binds to D2 (psbD) and may facilitate its incorporation into PSII. Present in less than 1% of PSII preparations. This Thermosynechococcus vestitus (strain NIES-2133 / IAM M-273 / BP-1) protein is CyanoP.